We begin with the raw amino-acid sequence, 564 residues long: Potassium-transporting ATPase potassium-binding subunit (564 aa).

10 helical membrane-spanning segments follow: residues 4-24 (YDYWLIIAFFAVVLVPAPFLG), 67-87 (MLALLAFNLAGFLLLFAILLF), 135-155 (AGLTVQNFVSAATGLAVLVAL), 179-199 (LYGLLPLCLVLALFLVWQGVP), 254-274 (WANLFELAAIILIPVALVFTF), 286-306 (AILGCMLALFLIGGATSLWAE), 382-402 (AGMYGMLLNVLIAVFLAGLMI), 420-440 (LLVVTLLVMPVGVLVLGAIAA), 487-507 (LMLGLGMLIGRFGYILPVLAL), and 528-548 (GPLFVTLLTVTILLVGGLTFL).

The protein belongs to the KdpA family. In terms of assembly, the system is composed of three essential subunits: KdpA, KdpB and KdpC.

It localises to the cell inner membrane. In terms of biological role, part of the high-affinity ATP-driven potassium transport (or Kdp) system, which catalyzes the hydrolysis of ATP coupled with the electrogenic transport of potassium into the cytoplasm. This subunit binds the periplasmic potassium ions and delivers the ions to the membrane domain of KdpB through an intramembrane tunnel. The sequence is that of Potassium-transporting ATPase potassium-binding subunit from Pseudomonas fluorescens (strain SBW25).